Here is a 288-residue protein sequence, read N- to C-terminus: Cell division protein DivIB (288 aa).

Residues 1 to 25 (MEKVIDITERVPAMKKRRRRRTNFK) lie on the Cytoplasmic side of the membrane. The chain crosses the membrane as a helical span at residues 26–46 (FLALVTIFLFIIIILLYFQLP). Over 47-288 (YSDIKKIDIK…LEEQNEEEPE (242 aa)) the chain is Extracellular. Positions 48-116 (SDIKKIDIKG…NEVQITVEEW (69 aa)) constitute a POTRA domain. The span at 253–263 (LIKENTEKTEE) shows a compositional bias: basic and acidic residues. Residues 253 to 288 (LIKENTEKTEEPAEETENADTEEGGQLEEQNEEEPE) are disordered. A compositionally biased stretch (acidic residues) spans 264–288 (PAEETENADTEEGGQLEEQNEEEPE).

It belongs to the FtsQ/DivIB family. DivIB subfamily.

The protein localises to the cell membrane. Cell division protein that may be involved in stabilizing or promoting the assembly of the division complex. The protein is Cell division protein DivIB of Solibacillus silvestris (strain StLB046) (Bacillus silvestris).